The primary structure comprises 197 residues: U1 small nuclear ribonucleoprotein C (197 aa).

The Matrin-type zinc-finger motif lies at 4–36 (YYCEYCDIYLTHSSPVGRRQHNQGRKHISAKIE). Residues 128-137 (FHNNKRINNI) show a composition bias toward low complexity. The disordered stretch occupies residues 128–178 (FHNNKRINNIPKPYNNYTNKPITNSSYKNDKQDYRNNNESNDNMNSNNFSN). Positions 142 to 154 (NNYTNKPITNSSY) are enriched in polar residues. Residues 164–178 (NNESNDNMNSNNFSN) are compositionally biased toward low complexity.

It belongs to the U1 small nuclear ribonucleoprotein C family. U1 snRNP is composed of the 7 core Sm proteins B/B', D1, D2, D3, E, F and G that assemble in a heptameric protein ring on the Sm site of the small nuclear RNA to form the core snRNP, and at least 3 U1 snRNP-specific proteins U1-70K, U1-A and U1-C. U1-C interacts with U1 snRNA and the 5' splice-site region of the pre-mRNA.

It localises to the nucleus. In terms of biological role, component of the spliceosomal U1 snRNP, which is essential for recognition of the pre-mRNA 5' splice-site and the subsequent assembly of the spliceosome. U1-C is directly involved in initial 5' splice-site recognition for both constitutive and regulated alternative splicing. The interaction with the 5' splice-site seems to precede base-pairing between the pre-mRNA and the U1 snRNA. Stimulates commitment or early (E) complex formation by stabilizing the base pairing of the 5' end of the U1 snRNA and the 5' splice-site region. This is U1 small nuclear ribonucleoprotein C (SNRPC) from Plasmodium berghei (strain Anka).